The following is a 381-amino-acid chain: Chaperone protein DnaJ (381 aa).

The J domain maps to 3-66 (DYYETLGVER…DKRRMYDSGV (64 aa)). The CR-type zinc finger occupies 129–211 (GGTAHVKINT…CMGHGRVRTT (83 aa)). Positions 142, 145, 159, 162, 185, 188, 199, and 202 each coordinate Zn(2+). CXXCXGXG motif repeat units lie at residues 142–149 (CQECGGSG), 159–166 (CPDCHGQG), 185–192 (CERCEGHG), and 199–206 (CPSCMGHG). A disordered region spans residues 355–381 (ATHVSQASRPQAGQKKGFFSKLKDALS). Residues 356 to 365 (THVSQASRPQ) are compositionally biased toward polar residues.

Belongs to the DnaJ family. Homodimer. Zn(2+) serves as cofactor.

The protein resides in the cytoplasm. Participates actively in the response to hyperosmotic and heat shock by preventing the aggregation of stress-denatured proteins and by disaggregating proteins, also in an autonomous, DnaK-independent fashion. Unfolded proteins bind initially to DnaJ; upon interaction with the DnaJ-bound protein, DnaK hydrolyzes its bound ATP, resulting in the formation of a stable complex. GrpE releases ADP from DnaK; ATP binding to DnaK triggers the release of the substrate protein, thus completing the reaction cycle. Several rounds of ATP-dependent interactions between DnaJ, DnaK and GrpE are required for fully efficient folding. Also involved, together with DnaK and GrpE, in the DNA replication of plasmids through activation of initiation proteins. The polypeptide is Chaperone protein DnaJ (Bifidobacterium longum (strain NCC 2705)).